The chain runs to 1097 residues: Protein kinase C-like 1 (1097 aa).

REM-1 domains lie at 2–76 (STSQ…QMQR) and 106–183 (KYEC…FSIN). The region spanning 189–311 (RDYEIMDSTK…AKDQGSSGWL (123 aa)) is the C2 domain. A disordered region spans residues 304–359 (DQGSSGWLPAANLPQTGGSGAGTGSSMTGGASYGATSPLPAHNDLRPSVSPSSDAK). Residues 327–340 (GSSMTGGASYGATS) are compositionally biased toward low complexity. 2 Phorbol-ester/DAG-type zinc fingers span residues 415 to 462 (GHQF…VTKC) and 480 to 530 (PHRF…PDFC). 3 disordered regions span residues 548–594 (KVSP…LRPA), 615–646 (YQEPVELPPQQQNQVVPSTRRRGHGSTDLSFE), and 724–763 (ETSHAKQQNQQVQQVQQQEELGHQRTHSSGKSGKSKRRKR). Positions 574–583 (PSMDSEETLH) are enriched in basic and acidic residues. The span at 730 to 741 (QQNQQVQQVQQQ) shows a compositional bias: low complexity. Positions 747-763 (QRTHSSGKSGKSKRRKR) are enriched in basic residues. Positions 770–1029 (FQFLAVLGKG…AEEIMEHPYF (260 aa)) constitute a Protein kinase domain. Residues 776 to 784 (LGKGNFGKV) and lysine 799 each bind ATP. The active-site Proton acceptor is the aspartate 895. The AGC-kinase C-terminal domain maps to 1030-1097 (HDVNFDDVLN…FSHISDNATI (68 aa)).

This sequence belongs to the protein kinase superfamily. AGC Ser/Thr protein kinase family. PKC subfamily.

The catalysed reaction is L-seryl-[protein] + ATP = O-phospho-L-seryl-[protein] + ADP + H(+). The enzyme catalyses L-threonyl-[protein] + ATP = O-phospho-L-threonyl-[protein] + ADP + H(+). Functionally, necessary for osmotic stability. This is Protein kinase C-like 1 (PKC1) from Candida albicans (Yeast).